Here is a 168-residue protein sequence, read N- to C-terminus: NADH-ubiquinone oxidoreductase chain 6 (168 aa).

A run of 5 helical transmembrane segments spans residues 1 to 21, 27 to 47, 50 to 70, 87 to 107, and 143 to 163; these read MKMMTIYIISLLLMIGFVAFA, IYGGLSLVVSGGLGCGMVVSL, VFLGLVVFLVYLGGMLVVFGY, VVAFIMLLFVLLLQVGWYFMS, and WALALLGWILFMTIYVVLEVV.

This sequence belongs to the complex I subunit 6 family. As to quaternary structure, core subunit of respiratory chain NADH dehydrogenase (Complex I) which is composed of 45 different subunits.

The protein resides in the mitochondrion inner membrane. It catalyses the reaction a ubiquinone + NADH + 5 H(+)(in) = a ubiquinol + NAD(+) + 4 H(+)(out). In terms of biological role, core subunit of the mitochondrial membrane respiratory chain NADH dehydrogenase (Complex I) which catalyzes electron transfer from NADH through the respiratory chain, using ubiquinone as an electron acceptor. Essential for the catalytic activity and assembly of complex I. The polypeptide is NADH-ubiquinone oxidoreductase chain 6 (MT-ND6) (Didelphis virginiana (North American opossum)).